The primary structure comprises 198 residues: Peptide deformylase (198 aa).

Cysteine 123 and histidine 170 together coordinate Fe cation. Glutamate 171 is a catalytic residue. Histidine 174 provides a ligand contact to Fe cation.

It belongs to the polypeptide deformylase family. It depends on Fe(2+) as a cofactor.

It carries out the reaction N-terminal N-formyl-L-methionyl-[peptide] + H2O = N-terminal L-methionyl-[peptide] + formate. In terms of biological role, removes the formyl group from the N-terminal Met of newly synthesized proteins. Requires at least a dipeptide for an efficient rate of reaction. N-terminal L-methionine is a prerequisite for activity but the enzyme has broad specificity at other positions. The protein is Peptide deformylase of Mycoplasmopsis pulmonis (strain UAB CTIP) (Mycoplasma pulmonis).